Reading from the N-terminus, the 121-residue chain is Large ribosomal subunit protein bL12 (121 aa).

The protein belongs to the bacterial ribosomal protein bL12 family. As to quaternary structure, homodimer. Part of the ribosomal stalk of the 50S ribosomal subunit. Forms a multimeric L10(L12)X complex, where L10 forms an elongated spine to which 2 to 4 L12 dimers bind in a sequential fashion. Binds GTP-bound translation factors.

In terms of biological role, forms part of the ribosomal stalk which helps the ribosome interact with GTP-bound translation factors. Is thus essential for accurate translation. In Pseudomonas putida (strain GB-1), this protein is Large ribosomal subunit protein bL12.